Reading from the N-terminus, the 110-residue chain is MEALATHRHARTSAQKARLVADQIRGLHVEKALELLAYSPKKSADLIKKVLESAIANAEHNEGADIDELTVSKVFVDEGPTMKRIKPRAKGRADRIFKRSSHITVVVADN.

This sequence belongs to the universal ribosomal protein uL22 family. As to quaternary structure, part of the 50S ribosomal subunit.

Its function is as follows. This protein binds specifically to 23S rRNA; its binding is stimulated by other ribosomal proteins, e.g. L4, L17, and L20. It is important during the early stages of 50S assembly. It makes multiple contacts with different domains of the 23S rRNA in the assembled 50S subunit and ribosome. Functionally, the globular domain of the protein is located near the polypeptide exit tunnel on the outside of the subunit, while an extended beta-hairpin is found that lines the wall of the exit tunnel in the center of the 70S ribosome. This chain is Large ribosomal subunit protein uL22, found in Pseudoalteromonas atlantica (strain T6c / ATCC BAA-1087).